The sequence spans 141 residues: Acetyltransferase YpeA (141 aa).

The 141-residue stretch at 1 to 141 (MEIRVFRQED…GKRLIEDEEY (141 aa)) folds into the N-acetyltransferase domain.

Belongs to the acetyltransferase family. YpeA subfamily.

The chain is Acetyltransferase YpeA (ypeA) from Escherichia coli (strain K12).